We begin with the raw amino-acid sequence, 90 residues long: MASMKSLATAILVVLLLAALSREGRSQNCSAAIGELMTCGPYVLPGNNGAPSEQCCSALRAVNHGCLCETINIISSLPDHCSLPAVNCAA.

The N-terminal stretch at 1-26 (MASMKSLATAILVVLLLAALSREGRS) is a signal peptide. Disulfide bonds link cysteine 29-cysteine 66, cysteine 39-cysteine 55, cysteine 56-cysteine 81, and cysteine 68-cysteine 88.

This sequence belongs to the A9/FIL1 family.

The protein localises to the secreted. This Lilium longiflorum (Trumpet lily) protein is Protein LIM1 (LIM1).